Reading from the N-terminus, the 122-residue chain is Small ribosomal subunit protein bS6 (122 aa).

It belongs to the bacterial ribosomal protein bS6 family.

Its function is as follows. Binds together with bS18 to 16S ribosomal RNA. This is Small ribosomal subunit protein bS6 from Methylibium petroleiphilum (strain ATCC BAA-1232 / LMG 22953 / PM1).